We begin with the raw amino-acid sequence, 415 residues long: Serine hydroxymethyltransferase (415 aa).

(6S)-5,6,7,8-tetrahydrofolate contacts are provided by residues Leu121 and 125–127 (GHL). At Lys229 the chain carries N6-(pyridoxal phosphate)lysine. Residue 352-354 (TPF) coordinates (6S)-5,6,7,8-tetrahydrofolate.

This sequence belongs to the SHMT family. In terms of assembly, homodimer. The cofactor is pyridoxal 5'-phosphate.

The protein resides in the cytoplasm. It carries out the reaction (6R)-5,10-methylene-5,6,7,8-tetrahydrofolate + glycine + H2O = (6S)-5,6,7,8-tetrahydrofolate + L-serine. It participates in one-carbon metabolism; tetrahydrofolate interconversion. The protein operates within amino-acid biosynthesis; glycine biosynthesis; glycine from L-serine: step 1/1. In terms of biological role, catalyzes the reversible interconversion of serine and glycine with tetrahydrofolate (THF) serving as the one-carbon carrier. This reaction serves as the major source of one-carbon groups required for the biosynthesis of purines, thymidylate, methionine, and other important biomolecules. Also exhibits THF-independent aldolase activity toward beta-hydroxyamino acids, producing glycine and aldehydes, via a retro-aldol mechanism. The protein is Serine hydroxymethyltransferase of Chromobacterium violaceum (strain ATCC 12472 / DSM 30191 / JCM 1249 / CCUG 213 / NBRC 12614 / NCIMB 9131 / NCTC 9757 / MK).